A 188-amino-acid polypeptide reads, in one-letter code: Elongation factor P-like protein (188 aa).

This sequence belongs to the elongation factor P family.

This Vibrio parahaemolyticus serotype O3:K6 (strain RIMD 2210633) protein is Elongation factor P-like protein.